Reading from the N-terminus, the 158-residue chain is MKNSRPVLFAVALASLLLLAVALYLQHVENMLPCPLCVIQRYAFAAIALICLVTAFRTEVTARIGAALAALASLAGAGVAGWHIYIKAHPTVSCGIDPLETSLNTIPTAKLLPFLLQADGLCTTEYAPIMGLSIPQWALVWFIVIALFLLHTAFRKKS.

Residues 1–7 (MKNSRPV) lie on the Cytoplasmic side of the membrane. The chain crosses the membrane as a helical span at residues 8–24 (LFAVALASLLLLAVALY). At 25–42 (LQHVENMLPCPLCVIQRY) the chain is on the periplasmic side. A disulfide bridge connects residues cysteine 34 and cysteine 37. Residues 43 to 57 (AFAAIALICLVTAFR) traverse the membrane as a helical segment. At 58–63 (TEVTAR) the chain is on the cytoplasmic side. Residues 64–81 (IGAALAALASLAGAGVAG) form a helical membrane-spanning segment. At 82 to 136 (WHIYIKAHPTVSCGIDPLETSLNTIPTAKLLPFLLQADGLCTTEYAPIMGLSIPQ) the chain is on the periplasmic side. Cysteine 94 and cysteine 122 are oxidised to a cystine. The helical transmembrane segment at 137–155 (WALVWFIVIALFLLHTAFR) threads the bilayer. Topologically, residues 156–158 (KKS) are cytoplasmic.

It belongs to the DsbB family.

It is found in the cell inner membrane. Its function is as follows. Required for disulfide bond formation in some periplasmic proteins. Acts by oxidizing the DsbA protein. The sequence is that of Disulfide bond formation protein B from Herminiimonas arsenicoxydans.